Reading from the N-terminus, the 574-residue chain is Isocitrate dehydrogenase kinase/phosphatase (574 aa).

Residues 315–321 and Lys336 contribute to the ATP site; that span reads APGIRGM. Residue Asp371 is part of the active site.

This sequence belongs to the AceK family.

The protein localises to the cytoplasm. It catalyses the reaction L-seryl-[isocitrate dehydrogenase] + ATP = O-phospho-L-seryl-[isocitrate dehydrogenase] + ADP + H(+). Its function is as follows. Bifunctional enzyme which can phosphorylate or dephosphorylate isocitrate dehydrogenase (IDH) on a specific serine residue. This is a regulatory mechanism which enables bacteria to bypass the Krebs cycle via the glyoxylate shunt in response to the source of carbon. When bacteria are grown on glucose, IDH is fully active and unphosphorylated, but when grown on acetate or ethanol, the activity of IDH declines drastically concomitant with its phosphorylation. The protein is Isocitrate dehydrogenase kinase/phosphatase of Escherichia coli O127:H6 (strain E2348/69 / EPEC).